The chain runs to 316 residues: Diacylglycerol kinase (316 aa).

One can recognise a DAGKc domain in the interval 1 to 132; it reads MRKRARIIYN…VDIGKMNNRY (132 aa). ATP-binding positions include 10–14, Thr-41, 67–73, and Thr-94; these read NPTSG and GDGTLNE. Positions 213, 216, and 218 each coordinate Mg(2+). Residue Glu-273 is the Proton acceptor of the active site.

The protein belongs to the diacylglycerol/lipid kinase family. As to quaternary structure, homodimer. Mg(2+) is required as a cofactor.

The enzyme catalyses a 1,2-diacyl-sn-glycerol + ATP = a 1,2-diacyl-sn-glycero-3-phosphate + ADP + H(+). Catalyzes the phosphorylation of diacylglycerol (DAG) into phosphatidic acid. Is a key enzyme involved in the production of lipoteichoic acid by reintroducing DAG formed from the breakdown of membrane phospholipids into the phosphatidylglycerol biosynthetic pathway. This Staphylococcus epidermidis (strain ATCC 35984 / DSM 28319 / BCRC 17069 / CCUG 31568 / BM 3577 / RP62A) protein is Diacylglycerol kinase (dagK).